We begin with the raw amino-acid sequence, 254 residues long: 23S rRNA (guanosine-2'-O-)-methyltransferase RlmB (254 aa).

S-adenosyl-L-methionine contacts are provided by G198, I218, and L227.

The protein belongs to the class IV-like SAM-binding methyltransferase superfamily. RNA methyltransferase TrmH family. RlmB subfamily. As to quaternary structure, homodimer.

The protein resides in the cytoplasm. It catalyses the reaction guanosine(2251) in 23S rRNA + S-adenosyl-L-methionine = 2'-O-methylguanosine(2251) in 23S rRNA + S-adenosyl-L-homocysteine + H(+). In terms of biological role, specifically methylates the ribose of guanosine 2251 in 23S rRNA. The sequence is that of 23S rRNA (guanosine-2'-O-)-methyltransferase RlmB from Blochmanniella floridana.